Reading from the N-terminus, the 344-residue chain is N-acetyl-gamma-glutamyl-phosphate reductase (344 aa).

Residue cysteine 148 is part of the active site.

Belongs to the NAGSA dehydrogenase family. Type 1 subfamily.

It is found in the cytoplasm. The enzyme catalyses N-acetyl-L-glutamate 5-semialdehyde + phosphate + NADP(+) = N-acetyl-L-glutamyl 5-phosphate + NADPH + H(+). Its pathway is amino-acid biosynthesis; L-arginine biosynthesis; N(2)-acetyl-L-ornithine from L-glutamate: step 3/4. Functionally, catalyzes the NADPH-dependent reduction of N-acetyl-5-glutamyl phosphate to yield N-acetyl-L-glutamate 5-semialdehyde. This is N-acetyl-gamma-glutamyl-phosphate reductase from Clostridium botulinum (strain Alaska E43 / Type E3).